The chain runs to 139 residues: MSRGRGAASGTKYRMTLGLPVQAIMNCADNSGAKNLYIVSVFGTGARLNRLPAASCGDMVLATVKKGKPDLRKKIMPAIVVRQRKAWRRKDGVYLYFEDNAGVIVNPKGEMKGSAITGPVAKECADLWPRIASNAGTVV.

This sequence belongs to the universal ribosomal protein uL14 family. In terms of assembly, component of the large ribosomal subunit (LSU). Mature yeast ribosomes consist of a small (40S) and a large (60S) subunit. The 40S small subunit contains 1 molecule of ribosomal RNA (18S rRNA) and at least 33 different proteins. The large 60S subunit contains 3 rRNA molecules (25S, 5.8S and 5S rRNA) and at least 46 different proteins.

Its subcellular location is the cytoplasm. It is found in the nucleus. Functionally, component of the ribosome, a large ribonucleoprotein complex responsible for the synthesis of proteins in the cell. The small ribosomal subunit (SSU) binds messenger RNAs (mRNAs) and translates the encoded message by selecting cognate aminoacyl-transfer RNA (tRNA) molecules. The large subunit (LSU) contains the ribosomal catalytic site termed the peptidyl transferase center (PTC), which catalyzes the formation of peptide bonds, thereby polymerizing the amino acids delivered by tRNAs into a polypeptide chain. The nascent polypeptides leave the ribosome through a tunnel in the LSU and interact with protein factors that function in enzymatic processing, targeting, and the membrane insertion of nascent chains at the exit of the ribosomal tunnel. In Schizosaccharomyces pombe (strain 972 / ATCC 24843) (Fission yeast), this protein is Large ribosomal subunit protein uL14A (rpl2301).